The following is a 678-amino-acid chain: Translation initiation factor eIF2B subunit epsilon (678 aa).

Position 172 is a phosphothreonine (threonine 172). The disordered stretch occupies residues 467-489; sequence STNELHLSDSESSETSSSSEEDM. The residue at position 500 (serine 500) is a Phosphoserine. Position 503 is a phosphothreonine (threonine 503). At serine 506 the chain carries Phosphoserine. The W2 domain maps to 508 to 674; it reads DFDEGDFNKE…NTAESESESE (167 aa).

The protein belongs to the eIF-2B gamma/epsilon subunits family. In terms of assembly, component of the translation initiation factor 2B (eIF2B) complex which is a heterodecamer of two sets of five different subunits: alpha, beta, gamma, delta and epsilon. Subunits alpha, beta and delta comprise a regulatory subcomplex and subunits epsilon and gamma comprise a catalytic subcomplex. Within the complex, the hexameric regulatory complex resides at the center, with the two heterodimeric catalytic subcomplexes bound on opposite sides.

It localises to the cytoplasm. Its subcellular location is the cytosol. Its function is as follows. Acts as a component of the translation initiation factor 2B (eIF2B) complex, which catalyzes the exchange of GDP for GTP on the eukaryotic initiation factor 2 (eIF2) complex gamma subunit. Its guanine nucleotide exchange factor activity is repressed when bound to eIF2 complex phosphorylated on the alpha subunit, thereby limiting the amount of methionyl-initiator methionine tRNA available to the ribosome and consequently global translation is repressed. The protein is Translation initiation factor eIF2B subunit epsilon (tif225) of Schizosaccharomyces pombe (strain 972 / ATCC 24843) (Fission yeast).